The primary structure comprises 565 residues: UV-stimulated scaffold protein A homolog (565 aa).

The VHS-like stretch occupies residues 11 to 156 (RKNLNRILQE…VTLRKTKFVD (146 aa)). The stretch at 155 to 215 (VDYENGEKKI…ELETTMEMLV (61 aa)) forms a coiled coil. The UVSSA-type zinc-finger motif lies at 441 to 468 (DRECLAKLPSGALCKRKDMFKCPLHGPL). Cysteine 444, cysteine 454, cysteine 462, and histidine 465 together coordinate Zn(2+). Residues 480–510 (DEDRLKEIDRKERKRLKEAEEFSRKIVKEYE) adopt a coiled-coil conformation. Disordered stretches follow at residues 510–530 (ESKTKRKRKHEEETSVRSRLQ) and 542–565 (VSADITSQQRSRLEKNFSHQFSHL).

Belongs to the UVSSA family.

It is found in the chromosome. Factor involved in transcription-coupled nucleotide excision repair (TC-NER) in response to UV damage. TC-NER allows RNA polymerase II-blocking lesions to be rapidly removed from the transcribed strand of active genes. The chain is UV-stimulated scaffold protein A homolog from Caenorhabditis briggsae.